The chain runs to 323 residues: tRNA U34 carboxymethyltransferase (323 aa).

Carboxy-S-adenosyl-L-methionine-binding positions include K91, W105, K110, G130, 152-154 (DPT), 181-182 (IE), M196, Y200, and R315.

Belongs to the class I-like SAM-binding methyltransferase superfamily. CmoB family. Homotetramer.

The enzyme catalyses carboxy-S-adenosyl-L-methionine + 5-hydroxyuridine(34) in tRNA = 5-carboxymethoxyuridine(34) in tRNA + S-adenosyl-L-homocysteine + H(+). Catalyzes carboxymethyl transfer from carboxy-S-adenosyl-L-methionine (Cx-SAM) to 5-hydroxyuridine (ho5U) to form 5-carboxymethoxyuridine (cmo5U) at position 34 in tRNAs. This Escherichia coli O81 (strain ED1a) protein is tRNA U34 carboxymethyltransferase.